Consider the following 129-residue polypeptide: Small ribosomal subunit protein uS11 (129 aa).

Belongs to the universal ribosomal protein uS11 family. In terms of assembly, part of the 30S ribosomal subunit. Interacts with proteins S7 and S18. Binds to IF-3.

Functionally, located on the platform of the 30S subunit, it bridges several disparate RNA helices of the 16S rRNA. Forms part of the Shine-Dalgarno cleft in the 70S ribosome. The sequence is that of Small ribosomal subunit protein uS11 from Bartonella quintana (strain Toulouse) (Rochalimaea quintana).